An 820-amino-acid polypeptide reads, in one-letter code: Sucrose synthase 2 (820 aa).

Residues 276 to 753 are GT-B glycosyltransferase; that stretch reads MVFNVVILSP…GLKRIYEKYT (478 aa).

It belongs to the glycosyltransferase 1 family. Plant sucrose synthase subfamily.

The catalysed reaction is an NDP-alpha-D-glucose + D-fructose = a ribonucleoside 5'-diphosphate + sucrose + H(+). Sucrose-cleaving enzyme that provides UDP-glucose and fructose for various metabolic pathways. This Tulipa gesneriana (Garden tulip) protein is Sucrose synthase 2.